A 282-amino-acid chain; its full sequence is Undecaprenyl-diphosphatase (282 aa).

Transmembrane regions (helical) follow at residues 40 to 60 (GAAF…MYFW), 85 to 105 (ARMG…GLLF), 115 to 135 (SLYW…LAEW), 153 to 173 (IGWK…IPGS), 193 to 213 (AARF…IFQL), 230 to 250 (LAAA…FLLS), and 258 to 278 (TIFI…LSTG).

This sequence belongs to the UppP family.

Its subcellular location is the cell inner membrane. It carries out the reaction di-trans,octa-cis-undecaprenyl diphosphate + H2O = di-trans,octa-cis-undecaprenyl phosphate + phosphate + H(+). Catalyzes the dephosphorylation of undecaprenyl diphosphate (UPP). Confers resistance to bacitracin. The chain is Undecaprenyl-diphosphatase from Chlorobium phaeovibrioides (strain DSM 265 / 1930) (Prosthecochloris vibrioformis (strain DSM 265)).